We begin with the raw amino-acid sequence, 343 residues long: MIKLSNITKVFHQGTRTIQALNNVSLHVPAGQIYGVIGASGAGKSTLIRCVNLLERPTEGSVLVDGQELTTLSESELTKARRQIGMIFQHFNLLSSRTVFGNVALPLELDNTPKDEVKRRVTELLSLVGLGDKHDSYPSNLSGGQKQRVAIARALASNPKVLLCDEATSALDPATTRSILELLKDINRRLGLTILLITHEMDVVKRICDCVAVISNGELIEQDTVSEVFSHPKTPLAQKFIQSTLHLDIPEDYQERLQAEPFTDCVPMLRLEFTGQSVDAPLLSETARRFNVNNNIISAQMDYAGGVKFGIMLTEMHGTQQDTQAAIAWLQEHHVKVEVLGYV.

One can recognise an ABC transporter domain in the interval 2-241 (IKLSNITKVF…PKTPLAQKFI (240 aa)). Residue 40-46 (SGAGKST) coordinates ATP. A C2 domain region spans residues 265–343 (CVPMLRLEFT…HVKVEVLGYV (79 aa)). L-methionine is bound by residues 278–283 (VDAPLL) and 295–296 (NI).

This sequence belongs to the ABC transporter superfamily. Methionine importer (TC 3.A.1.24) family. As to quaternary structure, the complex is composed of two ATP-binding proteins (MetN), two transmembrane proteins (MetI) and a solute-binding protein (MetQ).

The protein resides in the cell inner membrane. It catalyses the reaction L-methionine(out) + ATP + H2O = L-methionine(in) + ADP + phosphate + H(+). The enzyme catalyses D-methionine(out) + ATP + H2O = D-methionine(in) + ADP + phosphate + H(+). Its activity is regulated as follows. ATPase activity is inhibited by intracellular L-methionine. Binding of methionine to the dimerized C-terminal regulatory domain stabilizes an inward-facing, ATPase-inactive conformation of the transporter, and as a consequence, the rate of ATP hydrolysis decreases. ADP is a competitive inhibitor. Its function is as follows. Part of the ABC transporter complex MetNIQ involved in methionine import. Responsible for energy coupling to the transport system. It has also been shown to be involved in formyl-L-methionine transport. The sequence is that of Methionine import ATP-binding protein MetN from Escherichia coli (strain K12).